The sequence spans 317 residues: 2-oxoglutarate and iron-dependent oxygenase domain-containing protein 3 (317 aa).

The segment at 1–34 (MATRHRRRGGSAPSWAKPGKPGERPGGPKKSRGR) is disordered. At 1–39 (MATRHRRRGGSAPSWAKPGKPGERPGGPKKSRGRTSWKS) the chain is on the cytoplasmic side. Residues 40-60 (LLIWGVFGVTLGLMAGYYLWG) traverse the membrane as a helical; Signal-anchor for type II membrane protein segment. At 61–317 (ELITDDSVTE…EHAIGDPTWT (257 aa)) the chain is on the lumenal side. N-linked (GlcNAc...) asparagine glycosylation is found at asparagine 195 and asparagine 213. Residues 205–307 (KPTFFSRMNS…AITISFTCNP (103 aa)) form the Fe2OG dioxygenase domain. 2 residues coordinate Fe cation: histidine 228 and aspartate 230. Asparagine 265 carries N-linked (GlcNAc...) asparagine glycosylation. Histidine 286 provides a ligand contact to Fe cation. Arginine 296 is a catalytic residue. Residue arginine 296 coordinates 2-oxoglutarate.

It belongs to the OGFOD3 family. The cofactor is Fe(2+). L-ascorbate is required as a cofactor.

Its subcellular location is the membrane. This Xenopus tropicalis (Western clawed frog) protein is 2-oxoglutarate and iron-dependent oxygenase domain-containing protein 3 (ogfod3).